A 186-amino-acid chain; its full sequence is Acetyltransferase PA2578 (186 aa).

Positions 12 to 176 (LQLVPFQLGH…NVVLMGLLRQ (165 aa)) constitute an N-acetyltransferase domain. CoA contacts are provided by residues glutamine 37, 97-99 (IVL), glycine 105, asparagine 137, and 142-144 (HLY).

Homodimer.

Its function is as follows. Catalyzes the transfer of an acetyl group from acetyl coenzyme A (AcCoA) to an acceptor substrate and releases both CoA and the acetylated product. It prefers the antibiotic chloramphenicol. In Pseudomonas aeruginosa (strain ATCC 15692 / DSM 22644 / CIP 104116 / JCM 14847 / LMG 12228 / 1C / PRS 101 / PAO1), this protein is Acetyltransferase PA2578.